The primary structure comprises 288 residues: Eukaryotic translation initiation factor 3 subunit G (288 aa).

Disordered stretches follow at residues 1–33 (MSKL…NKDG) and 156–197 (DEPT…GGER). An RRM domain is found at 208 to 286 (ATLRVTNVSE…LILRVEFAKR (79 aa)).

This sequence belongs to the eIF-3 subunit G family. In terms of assembly, component of the eukaryotic translation initiation factor 3 (eIF-3) complex.

It localises to the cytoplasm. RNA-binding component of the eukaryotic translation initiation factor 3 (eIF-3) complex, which is involved in protein synthesis of a specialized repertoire of mRNAs and, together with other initiation factors, stimulates binding of mRNA and methionyl-tRNAi to the 40S ribosome. The eIF-3 complex specifically targets and initiates translation of a subset of mRNAs involved in cell proliferation. This subunit can bind 18S rRNA. This Aspergillus niger (strain ATCC MYA-4892 / CBS 513.88 / FGSC A1513) protein is Eukaryotic translation initiation factor 3 subunit G (tif35).